The following is a 1235-amino-acid chain: Serine/threonine-protein kinase TAO2 (1235 aa).

Phosphoserine is present on S9. The Protein kinase domain occupies 28–281 (FSDLREIGHG…SEVLLKHRFV (254 aa)). ATP-binding positions include 34 to 42 (IGHGSFGAV) and K57. Catalysis depends on D151, which acts as the Proton acceptor. Residue S181 is modified to Phosphoserine. Positions 318 to 457 (QEAPNGPGAE…TSTTSSARRR (140 aa)) are disordered. Residues 350-374 (SSHSVPSMSISASSQSSSVNSLADA) show a composition bias toward low complexity. Acidic residues predominate over residues 375-393 (SDNEEEEEEEEEEEEEEEG). Residues 394 to 409 (PEAREMAMMQEGEHTV) show a composition bias toward basic and acidic residues. S414 carries the phosphoserine modification. Coiled coils occupy residues 486–547 (SALR…RRHQ) and 574–601 (KELA…LQEN). S656 is modified (phosphoserine). The stretch at 681 to 713 (LRQHEATRELELRQLQAVQRTRAELTRLQHQTE) forms a coiled coil. Disordered regions lie at residues 732–777 (HAAQ…QPCS), 804–835 (KEGA…GSLV), and 891–939 (QGPA…RPCP). A compositionally biased stretch (polar residues) spans 766 to 777 (NTGTPIEQQPCS). Residues S777, S825, and S827 each carry the phosphoserine modification. Residues 899–908 (PEEEEEEEEG) are compositionally biased toward acidic residues. Pro residues predominate over residues 924–934 (PDIPPEPPPTH). 2 consecutive transmembrane segments (helical) span residues 965–985 (LLPL…GGGL) and 987–1007 (AALL…LLLC). H1011 and G1031 each carry phosphoserine. Transmembrane regions (helical) follow at residues 1012–1032 (LPSS…VLGL), 1043–1063 (LGLG…LVAM), and 1166–1186 (QGLA…WGLL). Residues 1198–1235 (LPRSQRQLGPPASRQPLPGTLAGRRSRTRQSRALPPWR) form a disordered region.

This sequence belongs to the protein kinase superfamily. STE Ser/Thr protein kinase family. STE20 subfamily. As to quaternary structure, interacts with MAP2K3 and MAP2K6. Self-associates. Interacts with tubulins through the C-terminal domain. Interacts with MAP3K7 and interferes with MAP3K7-binding to CHUK and thus prevents NF-kappa-B activation. Isoform 2 interacts with PCDH8; this complex may also include CDH2. The cofactor is Mg(2+). Isoforms 1 and 2 are autophosphorylated. Post-translationally, C-terminal cleavage of isoform 1 and subsequent nuclear localization requires CASP9 activity. In terms of processing, autophosphorylated. Phosphorylated by ATM. Phosphorylated on Ser-1031 by MAPK14. This phosphorylation is required PCDH8 for endocytosis. Ubiquitously expressed, with a higher level of expression in testis and brain.

The protein localises to the cytoplasmic vesicle membrane. It is found in the cytoplasm. It localises to the cytoskeleton. The protein resides in the nucleus. Its subcellular location is the cell projection. The protein localises to the dendrite. The catalysed reaction is L-seryl-[protein] + ATP = O-phospho-L-seryl-[protein] + ADP + H(+). The enzyme catalyses L-threonyl-[protein] + ATP = O-phospho-L-threonyl-[protein] + ADP + H(+). Selectively inhibited by the enantiopure organoruthenium inhibitor 9E1. Activated following arsenic trioxide (As(2)O(3)) treatment. Functionally, serine/threonine-protein kinase involved in different processes such as membrane blebbing and apoptotic bodies formation DNA damage response and MAPK14/p38 MAPK stress-activated MAPK cascade. Phosphorylates itself, MBP, activated MAPK8, MAP2K3, MAP2K6 and tubulins. Activates the MAPK14/p38 MAPK signaling pathway through the specific activation and phosphorylation of the upstream MAP2K3 and MAP2K6 kinases. In response to DNA damage, involved in the G2/M transition DNA damage checkpoint by activating the p38/MAPK14 stress-activated MAPK cascade, probably by mediating phosphorylation of upstream MAP2K3 and MAP2K6 kinases. Isoform 1, but not isoform 2, plays a role in apoptotic morphological changes, including cell contraction, membrane blebbing and apoptotic bodies formation. This function, which requires the activation of MAPK8/JNK and nuclear localization of C-terminally truncated isoform 1, may be linked to the mitochondrial CASP9-associated death pathway. Isoform 1 binds to microtubules and affects their organization and stability independently of its kinase activity. Prevents MAP3K7-mediated activation of CHUK, and thus NF-kappa-B activation, but not that of MAPK8/JNK. May play a role in the osmotic stress-MAPK8 pathway. Isoform 2, but not isoform 1, is required for PCDH8 endocytosis. Following homophilic interactions between PCDH8 extracellular domains, isoform 2 phosphorylates and activates MAPK14/p38 MAPK which in turn phosphorylates isoform 2. This process leads to PCDH8 endocytosis and CDH2 cointernalization. Both isoforms are involved in MAPK14 phosphorylation. This is Serine/threonine-protein kinase TAO2 (TAOK2) from Homo sapiens (Human).